The chain runs to 337 residues: Ketol-acid reductoisomerase (NADP(+)) (337 aa).

One can recognise a KARI N-terminal Rossmann domain in the interval 3–183 (IELLYDADAD…GGARAGVIPT (181 aa)). Residues 26-29 (YGSQ), arginine 49, serine 52, serine 54, and 84-87 (DTSQ) each bind NADP(+). Residue histidine 109 is part of the active site. Glycine 135 contributes to the NADP(+) binding site. A KARI C-terminal knotted domain is found at 184–329 (TFREETETDL…SKLRDLMSWV (146 aa)). Residues aspartate 192, glutamate 196, glutamate 228, and glutamate 232 each coordinate Mg(2+). Serine 253 contributes to the substrate binding site.

Belongs to the ketol-acid reductoisomerase family. Requires Mg(2+) as cofactor.

The enzyme catalyses (2R)-2,3-dihydroxy-3-methylbutanoate + NADP(+) = (2S)-2-acetolactate + NADPH + H(+). It carries out the reaction (2R,3R)-2,3-dihydroxy-3-methylpentanoate + NADP(+) = (S)-2-ethyl-2-hydroxy-3-oxobutanoate + NADPH + H(+). It participates in amino-acid biosynthesis; L-isoleucine biosynthesis; L-isoleucine from 2-oxobutanoate: step 2/4. The protein operates within amino-acid biosynthesis; L-valine biosynthesis; L-valine from pyruvate: step 2/4. In terms of biological role, involved in the biosynthesis of branched-chain amino acids (BCAA). Catalyzes an alkyl-migration followed by a ketol-acid reduction of (S)-2-acetolactate (S2AL) to yield (R)-2,3-dihydroxy-isovalerate. In the isomerase reaction, S2AL is rearranged via a Mg-dependent methyl migration to produce 3-hydroxy-3-methyl-2-ketobutyrate (HMKB). In the reductase reaction, this 2-ketoacid undergoes a metal-dependent reduction by NADPH to yield (R)-2,3-dihydroxy-isovalerate. The polypeptide is Ketol-acid reductoisomerase (NADP(+)) (Corynebacterium diphtheriae (strain ATCC 700971 / NCTC 13129 / Biotype gravis)).